Consider the following 118-residue polypeptide: Integration host factor subunit alpha (118 aa).

The segment at 97 to 118 is disordered; sequence NGAMPMSTEESDENTAQSASGG.

This sequence belongs to the bacterial histone-like protein family. As to quaternary structure, heterodimer of an alpha and a beta chain.

In terms of biological role, this protein is one of the two subunits of integration host factor, a specific DNA-binding protein that functions in genetic recombination as well as in transcriptional and translational control. The protein is Integration host factor subunit alpha of Rhodopseudomonas palustris (strain ATCC BAA-98 / CGA009).